The chain runs to 236 residues: Probable transcriptional regulatory protein FP0835 (236 aa).

It belongs to the TACO1 family.

It is found in the cytoplasm. The protein is Probable transcriptional regulatory protein FP0835 of Flavobacterium psychrophilum (strain ATCC 49511 / DSM 21280 / CIP 103535 / JIP02/86).